The chain runs to 320 residues: Ribosome biogenesis protein BRX1 homolog 2 (320 aa).

The disordered stretch occupies residues 1 to 40; the sequence is MGRKRKHSETEAPAPVKKSDEPAPDRPKRTLLGWKDKSEG. Over residues 17 to 40 the composition is skewed to basic and acidic residues; the sequence is KKSDEPAPDRPKRTLLGWKDKSEG. In terms of domain architecture, Brix spans 57–260; the sequence is EKVLVTCSRR…PIKIFAGSFG (204 aa). Positions 297-320 are disordered; sequence RKKMHELSNPLEPDEFADMWKDDE. Positions 308–320 are enriched in acidic residues; sequence EPDEFADMWKDDE.

It belongs to the BRX1 family. In terms of tissue distribution, expressed in roots, rosette leaves, stems, flowers, siliques and seeds.

It is found in the nucleus. It localises to the nucleolus. In terms of biological role, involved in pre-rRNA processing and required for biogenesis of the large (60S) ribosomal subunit. Required for proper development. This chain is Ribosome biogenesis protein BRX1 homolog 2, found in Arabidopsis thaliana (Mouse-ear cress).